We begin with the raw amino-acid sequence, 297 residues long: Formylmethanofuran--tetrahydromethanopterin formyltransferase (297 aa).

This sequence belongs to the FTR family. In terms of assembly, homotetramer.

The protein localises to the cytoplasm. It catalyses the reaction N-formylmethanofuran + 5,6,7,8-tetrahydromethanopterin + H(+) = N(5)-formyl-5,6,7,8-tetrahydromethanopterin + methanofuran. It participates in one-carbon metabolism; methanogenesis from CO(2); 5,10-methenyl-5,6,7,8-tetrahydromethanopterin from CO(2): step 2/3. Its function is as follows. Catalyzes the reversible transfer of a formyl group from formylmethanofuran (formyl-MFR) to tetrahydromethanopterin (H(4)MPT) to produce 5-formyl tetrahydromethanopterin (5-formyl-H(4)MPT) and methanofuran (MFR). The chain is Formylmethanofuran--tetrahydromethanopterin formyltransferase from Methanococcoides burtonii (strain DSM 6242 / NBRC 107633 / OCM 468 / ACE-M).